A 147-amino-acid chain; its full sequence is Large ribosomal subunit protein uL22c (147 aa).

It belongs to the universal ribosomal protein uL22 family. In terms of assembly, part of the 50S ribosomal subunit.

Its subcellular location is the plastid. In terms of biological role, this protein binds specifically to 23S rRNA. Functionally, the globular domain of the protein is located near the polypeptide exit tunnel on the outside of the subunit, while an extended beta-hairpin is found that lines the wall of the exit tunnel in the center of the 70S ribosome. This is Large ribosomal subunit protein uL22c (rpl22) from Cuscuta obtusiflora (Peruvian dodder).